A 125-amino-acid polypeptide reads, in one-letter code: Small ribosomal subunit protein uS13 (125 aa).

Positions 99-125 (RGQRTKTNARTRKGKRKTVANKKMAAK) are disordered.

Belongs to the universal ribosomal protein uS13 family. Part of the 30S ribosomal subunit. Forms a loose heterodimer with protein S19. Forms two bridges to the 50S subunit in the 70S ribosome.

In terms of biological role, located at the top of the head of the 30S subunit, it contacts several helices of the 16S rRNA. In the 70S ribosome it contacts the 23S rRNA (bridge B1a) and protein L5 of the 50S subunit (bridge B1b), connecting the 2 subunits; these bridges are implicated in subunit movement. Contacts the tRNAs in the A and P-sites. This chain is Small ribosomal subunit protein uS13, found in Borrelia turicatae (strain 91E135).